The sequence spans 192 residues: Peptidyl-tRNA hydrolase (192 aa).

Tyr-14 is a binding site for tRNA. Residue His-19 is the Proton acceptor of the active site. Tyr-64, Asn-66, and Asn-112 together coordinate tRNA.

The protein belongs to the PTH family. As to quaternary structure, monomer.

It is found in the cytoplasm. The enzyme catalyses an N-acyl-L-alpha-aminoacyl-tRNA + H2O = an N-acyl-L-amino acid + a tRNA + H(+). Hydrolyzes ribosome-free peptidyl-tRNAs (with 1 or more amino acids incorporated), which drop off the ribosome during protein synthesis, or as a result of ribosome stalling. Functionally, catalyzes the release of premature peptidyl moieties from peptidyl-tRNA molecules trapped in stalled 50S ribosomal subunits, and thus maintains levels of free tRNAs and 50S ribosomes. The polypeptide is Peptidyl-tRNA hydrolase (Anaeromyxobacter dehalogenans (strain 2CP-1 / ATCC BAA-258)).